A 453-amino-acid polypeptide reads, in one-letter code: Ribosomal protein uS12 methylthiotransferase RimO (453 aa).

In terms of domain architecture, MTTase N-terminal spans 9–124 (PKVGFVSLGC…VMEAVHTHLP (116 aa)). The [4Fe-4S] cluster site is built by Cys18, Cys54, Cys83, Cys155, Cys159, and Cys162. Positions 141–382 (LTPKHYAYLK…MEVAERVSAR (242 aa)) constitute a Radical SAM core domain. A TRAM domain is found at 385–453 (QRKVGKSLRV…ADGHDLWGEV (69 aa)).

Belongs to the methylthiotransferase family. RimO subfamily. [4Fe-4S] cluster serves as cofactor.

It localises to the cytoplasm. The enzyme catalyses L-aspartate(89)-[ribosomal protein uS12]-hydrogen + (sulfur carrier)-SH + AH2 + 2 S-adenosyl-L-methionine = 3-methylsulfanyl-L-aspartate(89)-[ribosomal protein uS12]-hydrogen + (sulfur carrier)-H + 5'-deoxyadenosine + L-methionine + A + S-adenosyl-L-homocysteine + 2 H(+). In terms of biological role, catalyzes the methylthiolation of an aspartic acid residue of ribosomal protein uS12. The protein is Ribosomal protein uS12 methylthiotransferase RimO of Ralstonia pickettii (strain 12J).